The following is a 672-amino-acid chain: MRRREPGRDVKRAAEEEFIELERRTDTYEDAVLNEDPQMKGFRFPSILSFPVPNKTIETGVTDENPFSARKSAFFTNRLIGREESDSSSSREDSPLGSTETGESCSTTDDEESKEKRIEYRDSQTQRCLGFCFRQLFFSRMWVFILQFIASYYAGDRFRTDGFNLVDKLIEPGQSVFGDVVVRRGLMGLRRWDAQQFLFIAEHHYIFEHSLAFFAGFPETVNYVRVGVNNGMESVFGWTFPPWVTITLAAVFVNLFCFLLCGMTLYQVVLIMTRSVKISLLAVSIFAFNPASIFFSSAYSESMFFTMTLTGFVFMLFGLRGKGFWHRMLKGFTGTICFGLTFAVRSNGLLNFLYVAWIWCGTLLWDEEMPIPDCHKLISTLAATKNERYKQEWQAKFWRFQQKRKQNRKVFRWTDPNFSRCVTLFIVIVCAISATLLFFTPYVFMTNFTADEFCKPQDSHKQAVETIAKTVRLSPKTVSVKNAWEKTTWCKKPKLFGIIARYYGEIQTKYWSVKFFGYWKIKKIPCFLMMLPAAILTVLAIKSSWNDVFLNKRWNNIWVLTARSDHSLPMAIHSSVLLFVAIFYINSEVFTRIIFSSSPFIYIYIATYIDKLTQGTIAGNRLWQYFESPGILPFFVFRRVWQDGWRGKLLYIYILGYFVFGTMAHSAWLPFT.

Residues 1–134 are Cytoplasmic-facing; it reads MRRREPGRDV…TQRCLGFCFR (134 aa). The segment covering 82–94 has biased composition (basic and acidic residues); sequence REESDSSSSREDS. The tract at residues 82–115 is disordered; sequence REESDSSSSREDSPLGSTETGESCSTTDDEESKE. The segment covering 97–107 has biased composition (low complexity); the sequence is GSTETGESCST. The helical transmembrane segment at 135–155 threads the bilayer; sequence QLFFSRMWVFILQFIASYYAG. At 156–239 the chain is on the extracellular side; sequence DRFRTDGFNL…NGMESVFGWT (84 aa). A helical transmembrane segment spans residues 240–260; it reads FPPWVTITLAAVFVNLFCFLL. The Cytoplasmic portion of the chain corresponds to 261-277; it reads CGMTLYQVVLIMTRSVK. 2 helical membrane-spanning segments follow: residues 278 to 298 and 299 to 319; these read ISLL…FSSA and YSES…LFGL. Topologically, residues 320–345 are extracellular; that stretch reads RGKGFWHRMLKGFTGTICFGLTFAVR. Residues 346–366 traverse the membrane as a helical segment; the sequence is SNGLLNFLYVAWIWCGTLLWD. The Cytoplasmic portion of the chain corresponds to 367–423; sequence EEMPIPDCHKLISTLAATKNERYKQEWQAKFWRFQQKRKQNRKVFRWTDPNFSRCVT. Residues 424–444 traverse the membrane as a helical segment; sequence LFIVIVCAISATLLFFTPYVF. The Extracellular segment spans residues 445-520; sequence MTNFTADEFC…WSVKFFGYWK (76 aa). Residues 521–541 traverse the membrane as a helical segment; the sequence is IKKIPCFLMMLPAAILTVLAI. The Cytoplasmic portion of the chain corresponds to 542-569; it reads KSSWNDVFLNKRWNNIWVLTARSDHSLP. Residues 570–590 form a helical membrane-spanning segment; it reads MAIHSSVLLFVAIFYINSEVF. The Extracellular segment spans residues 591–592; sequence TR. The chain crosses the membrane as a helical span at residues 593 to 613; that stretch reads IIFSSSPFIYIYIATYIDKLT. At 614–648 the chain is on the cytoplasmic side; sequence QGTIAGNRLWQYFESPGILPFFVFRRVWQDGWRGK. The chain crosses the membrane as a helical span at residues 649–669; sequence LLYIYILGYFVFGTMAHSAWL. The Extracellular portion of the chain corresponds to 670 to 672; sequence PFT.

Belongs to the PIGV family. In terms of tissue distribution, expressed in epithelial tissues including the epidermis, pharynx, intestine, rectum and excretory cell during embryogenesis.

It is found in the endoplasmic reticulum membrane. The protein operates within glycolipid biosynthesis; glycosylphosphatidylinositol-anchor biosynthesis. Functionally, alpha-1,6-mannosyltransferase involved in glycosylphosphatidylinositol-anchor biosynthesis. Transfers the second mannose to the glycosylphosphatidylinositol during GPI precursor assembly. Required for maintenance of epithelial integrity during embryogenesis. In Caenorhabditis elegans, this protein is GPI mannosyltransferase pigv-1.